The chain runs to 563 residues: Proton channel OTOP2 (563 aa).

The interval methionine 1–proline 20 is disordered. The next 12 helical transmembrane spans lie at leucine 30 to glycine 50, valine 62 to leucine 82, proline 100 to phenylalanine 120, isoleucine 137 to serine 157, leucine 173 to valine 193, phenylalanine 242 to methionine 262, phenylalanine 290 to leucine 310, alanine 325 to leucine 345, leucine 373 to valine 393, leucine 403 to isoleucine 423, aspartate 496 to alanine 516, and phenylalanine 528 to tyrosine 548.

Belongs to the otopetrin family. In terms of tissue distribution, expressed at higher level in stomach, testis and olfactory bulb.

It localises to the cell membrane. The enzyme catalyses H(+)(in) = H(+)(out). Its activity is regulated as follows. Actives at neutral and alkaline extracellular pH, acid extracellular pH appears to inhibit the channel. Insensitive to activation by Zn(2+). Proton-selective ion channel open at neutral pH. Actives at neutral and alkaline extracellular pH, likely participates in some alkali-related physiological activities. The polypeptide is Proton channel OTOP2 (Mus musculus (Mouse)).